Reading from the N-terminus, the 299-residue chain is HTH-type transcriptional regulator CrgA (299 aa).

Residues 1–60 enclose the HTH lysR-type domain; sequence MKTNSEELTVFVQVVESGSFSRAAEQLAMANSAVSRIVKRLEEKLGVNLLNRTTRQLSLT. Positions 20–39 form a DNA-binding region, H-T-H motif; the sequence is FSRAAEQLAMANSAVSRIVK.

The protein belongs to the LysR transcriptional regulatory family. Forms oligomers. Oligomerization is required for DNA binding.

Involved in the regulation of bacterial adhesion to host epithelial cells. May play a central regulatory role in meningococcal adhesion, particularly in switching from initial adhesion to intimate adhesion by downregulating the bacterial surface structures that hinder this adhesion. During intimate adhesion, negatively regulates the expression of pilC1, encoding a pilus-associated protein, pilE, encoding the pilin, and sia genes, encoding the capsule. Also negatively regulates its own expression. May also regulate other genes that are involved in intimate adhesion. Binds specifically to the promoter region of pilC1 and crgA (both harboring a CREN element), and pilE and sia (both devoid of a CREN element). Acts through interaction with RNA polymerase (RNAP). Interaction with RNAP leads to the production of short abortive transcripts, suggesting that CrgA may act by preventing RNAP from clearing the promoter. This chain is HTH-type transcriptional regulator CrgA, found in Neisseria meningitidis serogroup C (strain 8013).